Here is a 600-residue protein sequence, read N- to C-terminus: Keratin, type II cuticular Hb4 (600 aa).

The segment at 1-165 (MSCRSYRVSS…PNAQRVKKDE (165 aa)) is head. The 312-residue stretch at 165–476 (EKEQIKTLNN…RLLEGEESRL (312 aa)) folds into the IF rod domain. A coil 1A region spans residues 166–200 (KEQIKTLNNKFASFIDKVRFLEQQNKLLETKWSFL). The linker 1 stretch occupies residues 201–210 (QEQKCIRSNL). A coil 1B region spans residues 211–311 (EPLFESYITN…YMEEIQLLQS (101 aa)). The linker 12 stretch occupies residues 312 to 328 (HISETSVIVKMDNSRDL). The coil 2 stretch occupies residues 329–472 (NLDGIIAEVK…ATYRRLLEGE (144 aa)). The interval 473–600 (ESRLCEGVGP…STTTSCRTKY (128 aa)) is tail.

It belongs to the intermediate filament family. As to quaternary structure, heterotetramer of two type I and two type II keratins. Expressed in the hair follicles.

This is Keratin, type II cuticular Hb4 (KRT84) from Homo sapiens (Human).